The following is a 394-amino-acid chain: Maltose permease (394 aa).

At 1–11 the chain is on the cytoplasmic side; sequence MGAAFKWGAAA. A helical membrane pass occupies residues 12 to 38; it reads RKTVFPLFYFLIFFAFGALFPLLSVYL. Residues 39 to 45 are Extracellular-facing; the sequence is QEEARLS. A helical transmembrane segment spans residues 46-74; it reads GAAIGWIMSLPPIVTMAAQPLWGTAADYT. At 75 to 78 the chain is on the cytoplasmic side; sequence RKPV. The chain crosses the membrane as a helical span at residues 79–104; that stretch reads GLLLAALVLAALFGVMYALAGSYRLF. Residues 105–108 lie on the Extracellular side of the membrane; that stretch reads VVLT. The chain crosses the membrane as a helical span at residues 109–126; it reads VLLSAMQSAIVPLSDSLA. Over 127-137 the chain is Cytoplasmic; the sequence is LRHVHEQGGNY. Residues 138 to 160 traverse the membrane as a helical segment; it reads GAIRLWGSLGFAMAVLAVGWLSD. Residues 161–163 are Extracellular-facing; it reads HIA. The helical transmembrane segment at 164–183 threads the bilayer; the sequence is FAVIFYAFSLALLTAAALAT. Residues 184 to 213 are Cytoplasmic-facing; the sequence is RLPRYPMGAPGALTRQDVRGLLASRPFRLL. A helical transmembrane segment spans residues 214 to 233; that stretch reads LVATFLLFGPILANNSYFGL. Residues 234–237 are Extracellular-facing; sequence LIHE. A helical membrane pass occupies residues 238-262; that stretch reads LGGTLTGIGLAFLFAAGSEAPFMKA. The Cytoplasmic segment spans residues 263-272; the sequence is ADRLIGRFGM. A helical transmembrane segment spans residues 273 to 292; sequence VRLLLLAALISAARWLAYAA. The Extracellular portion of the chain corresponds to 293–295; the sequence is DPP. The chain crosses the membrane as a helical span at residues 296-318; it reads LWFVYMTTVVQGCSVGLAIPTAL. The Cytoplasmic portion of the chain corresponds to 319-330; sequence QYARRLAPERVQ. The helical transmembrane segment at 331 to 358 threads the bilayer; it reads STAVALYSAVGNGLGAWFCTLVGGYLLE. Residues 359 to 361 are Extracellular-facing; that stretch reads RWQ. Residues 362–382 form a helical membrane-spanning segment; the sequence is IGAVYLFFSICTIVGVLVLLL. The Cytoplasmic segment spans residues 383–394; it reads LAKRERTAGEEK.

Belongs to the major facilitator superfamily.

It is found in the cell membrane. High affinity transport of maltose. In Geobacillus stearothermophilus (Bacillus stearothermophilus), this protein is Maltose permease (malA).